The chain runs to 478 residues: Serine hydroxymethyltransferase, cytosolic (478 aa).

At lysine 251 the chain carries N6-(pyridoxal phosphate)lysine.

This sequence belongs to the SHMT family. Homotetramer. Identified in complex with FAM175B and the other subunits of the BRISC complex, at least composed of FAM175B/ABRO1, BRCC3/BRCC36, BABAM2 and BABAM1/NBA1. Requires pyridoxal 5'-phosphate as cofactor.

The protein resides in the cytoplasm. It carries out the reaction (6R)-5,10-methylene-5,6,7,8-tetrahydrofolate + glycine + H2O = (6S)-5,6,7,8-tetrahydrofolate + L-serine. The protein operates within one-carbon metabolism; tetrahydrofolate interconversion. Interconversion of serine and glycine. The sequence is that of Serine hydroxymethyltransferase, cytosolic (Shmt1) from Mus musculus (Mouse).